The following is a 389-amino-acid chain: MATKRDYYEILGLSKDSSVEDIKKTYRKLALQYHPDRNKEPGAEEKFKEISEAYAVLSDAEKRAQYDRFGHAGIDNQYSAEDIFRGADFGGFGDIFEMFFGGGRRGGPMGPRRGSDLQYDLYVTFEEAAFGVRKDIDIPRTERCSTCSGTGAKPGTSPKRCPNCGGTGQVRTTRSTLGMQFVSTTTCSACHGRGQVVESPCPTCSGAGRVRSRRKMSVNVPAGADSGMTLRLSGEGDAGEPGAPSGDLYIIVHVMEHKYFKRVDYDVISELPISFTQAALGADIMVDTLYGKVKMNIPSGTQTHSVFRLKDKGIQRLQGHGKGDQLVRVIIRTPTKLTQEQKDLLHQFEYLSNGKKPEAEERSRSDKQKSEKPRKSKGLFEKVKDAFES.

The region spanning 6–70 is the J domain; the sequence is DYYEILGLSK…EKRAQYDRFG (65 aa). A CR-type zinc finger spans residues 131–213; sequence GVRKDIDIPR…CSGAGRVRSR (83 aa). The Zn(2+) site is built by cysteine 144, cysteine 147, cysteine 161, cysteine 164, cysteine 187, cysteine 190, cysteine 201, and cysteine 204. 4 CXXCXGXG motif repeats span residues 144–151, 161–168, 187–194, and 201–208; these read CSTCSGTG, CPNCGGTG, CSACHGRG, and CPTCSGAG. Residues 145–167 are disordered; it reads STCSGTGAKPGTSPKRCPNCGGT. The segment at 351 to 389 is disordered; it reads LSNGKKPEAEERSRSDKQKSEKPRKSKGLFEKVKDAFES. Over residues 355-389 the composition is skewed to basic and acidic residues; that stretch reads KKPEAEERSRSDKQKSEKPRKSKGLFEKVKDAFES.

The protein belongs to the DnaJ family. As to quaternary structure, homodimer. The cofactor is Zn(2+).

The protein resides in the cytoplasm. In terms of biological role, participates actively in the response to hyperosmotic and heat shock by preventing the aggregation of stress-denatured proteins and by disaggregating proteins, also in an autonomous, DnaK-independent fashion. Unfolded proteins bind initially to DnaJ; upon interaction with the DnaJ-bound protein, DnaK hydrolyzes its bound ATP, resulting in the formation of a stable complex. GrpE releases ADP from DnaK; ATP binding to DnaK triggers the release of the substrate protein, thus completing the reaction cycle. Several rounds of ATP-dependent interactions between DnaJ, DnaK and GrpE are required for fully efficient folding. Also involved, together with DnaK and GrpE, in the DNA replication of plasmids through activation of initiation proteins. This chain is Chaperone protein DnaJ, found in Methanosarcina mazei (strain ATCC BAA-159 / DSM 3647 / Goe1 / Go1 / JCM 11833 / OCM 88) (Methanosarcina frisia).